Reading from the N-terminus, the 348-residue chain is 3-isopropylmalate dehydrogenase (348 aa).

NAD(+) is bound at residue 76 to 87; it reads GPKWTDPNNRPE. Substrate contacts are provided by Arg94, Arg104, Arg132, and Asp217. 3 residues coordinate Mg(2+): Asp217, Asp241, and Asp245. 275–287 lines the NAD(+) pocket; sequence GSAPDIAGKNVAN.

The protein belongs to the isocitrate and isopropylmalate dehydrogenases family. LeuB type 1 subfamily. As to quaternary structure, homodimer. The cofactor is Mg(2+). Mn(2+) is required as a cofactor.

It localises to the cytoplasm. It carries out the reaction (2R,3S)-3-isopropylmalate + NAD(+) = 4-methyl-2-oxopentanoate + CO2 + NADH. Its pathway is amino-acid biosynthesis; L-leucine biosynthesis; L-leucine from 3-methyl-2-oxobutanoate: step 3/4. Functionally, catalyzes the oxidation of 3-carboxy-2-hydroxy-4-methylpentanoate (3-isopropylmalate) to 3-carboxy-4-methyl-2-oxopentanoate. The product decarboxylates to 4-methyl-2 oxopentanoate. The sequence is that of 3-isopropylmalate dehydrogenase from Staphylococcus aureus (strain bovine RF122 / ET3-1).